The chain runs to 613 residues: Protein ECM3 (613 aa).

The next 4 membrane-spanning stretches (helical) occupy residues 10–30 (IWAS…GFGL), 74–94 (GIIC…AFIV), 106–126 (GGIL…AYLQ), and 143–163 (VANV…LGGF). The segment at 177-256 (DEENTLTNDD…PAIDDRSSNS (80 aa)) is disordered. 2 stretches are compositionally biased toward polar residues: residues 187-206 (SAQQ…SNQD) and 213-226 (ESTV…SYIS). Residues Ser-291 and Ser-338 each carry the phosphoserine modification. Positions 345-366 (RRRKSSISSQGAPSVLQADGTI) are disordered. The next 4 membrane-spanning stretches (helical) occupy residues 432–452 (MAVI…LFVT), 471–491 (FIMD…LILL), 546–566 (MLLF…LIYF), and 587–607 (FLML…SYFI).

It localises to the endoplasmic reticulum membrane. In terms of biological role, may be involved in cell wall organization and biogenesis. The polypeptide is Protein ECM3 (ECM3) (Saccharomyces cerevisiae (strain ATCC 204508 / S288c) (Baker's yeast)).